Reading from the N-terminus, the 704-residue chain is MSQVTTSYSYDAPTDFINFSSLTDEEDMQHIDSWFDEKANLENKFTGKDGTGGLYQGKTPLRKANLHRDVTPLRPVDNTYNKQAEKENLVEESIPSNECPSMKVKETTSRNNPVQPQRRSLRLSAKKNLEQKEKQHVKMKAKRCGTPVIINEFPPSKKMKVQKILKSTEEQELEKRMKMQQEVVEMRKRNEEFKKFALAGAGQPVKKSVSQVTKAVDFHFRTDERVKQHPKNQEEYKEVNFTSELRKHPPSPARVTKGCTIVMPFNLSQGKKRTFDETASTYVPLAQQVEAFHKRTPTRYHLRNRKDDIMPLPSKSVVRICRDPQTPVLQTKHRTRPVTCKSAADLEAEELEKQQQYKFKAQELDPRILEGGPILPKKPPVKPPTQPVGFDLEIEKRIQERESKKKLEEEHYEFHSRPCPTKILEDVVGVPEKKELPITVPKSPAFALKNRIRMPTKEDKEEEEPVMIRAQPVPYFGMPFKPQIPVGRTVEVCPFSFDSRDKERQLQKEKKIKELQKGEVPKFKAHPLPHFDTINLPEKKVKNTTQVEPFCLETDRRGALKAQTWKHQLDEELKQQKEAACFKARPNTVISQEPFVPKREKKSVIEGLSGSLVQEPFQLATEKRAKERQELEKRMAEVEALKAQQLEEARQQEEEQQKEELARLRKELVHKANPIRRYQGVEVKSSDQPLTVPVSPKFSTRFHC.

A phosphothreonine mark is found at T59 and T71. Residues 92–119 form a disordered region; it reads ESIPSNECPSMKVKETTSRNNPVQPQRR. Residues 109–118 show a composition bias toward polar residues; that stretch reads SRNNPVQPQR. A phosphoserine mark is found at S120 and S124. An N6-acetyllysine modification is found at K127. A Phosphothreonine modification is found at T146. S251 and S268 each carry phosphoserine. A Phosphothreonine modification is found at T296. Residue S316 is modified to Phosphoserine. A Phosphothreonine modification is found at T326. K332 is subject to N6-acetyllysine. A Glycyl lysine isopeptide (Lys-Gly) (interchain with G-Cter in SUMO2) cross-link involves residue K434. Residue S443 is modified to Phosphoserine. T456 carries the post-translational modification Phosphothreonine. Glycyl lysine isopeptide (Lys-Gly) (interchain with G-Cter in SUMO2) cross-links involve residues K457 and K598. S695 carries the post-translational modification Phosphoserine. Residue K697 forms a Glycyl lysine isopeptide (Lys-Gly) (interchain with G-Cter in SUMO2) linkage.

Belongs to the TPX2 family. As to quaternary structure, interacts with AURKA. Interacts with importin-alpha; leading to inactivate TPX2. Interacts with HNRNPU; this interaction recruits HNRNPU to spindle microtubules (MTs). Interacts with BCL2L10. Interacts with KIF11.

The protein localises to the nucleus. Its subcellular location is the cytoplasm. The protein resides in the cytoskeleton. It localises to the spindle. It is found in the spindle pole. Functionally, spindle assembly factor required for normal assembly of mitotic spindles. Required for normal assembly of microtubules during apoptosis. Required for chromatin and/or kinetochore dependent microtubule nucleation. Mediates AURKA localization to spindle microtubules. Activates AURKA by promoting its autophosphorylation at 'Thr-288' and protects this residue against dephosphorylation. TPX2 is inactivated upon binding to importin-alpha. At the onset of mitosis, GOLGA2 interacts with importin-alpha, liberating TPX2 from importin-alpha, allowing TPX2 to activate AURKA kinase and stimulate local microtubule nucleation. The polypeptide is Targeting protein for Xklp2 (TPX2) (Bos taurus (Bovine)).